A 252-amino-acid polypeptide reads, in one-letter code: MTSHAPDPVHQFEVSRLINISIGNMDLSFTNVSFFIVATVVVSSVFLFISSSSRGLVPTRMQSVSEMAYEFVASTLRESSGVQGMQFFPLVFSLFTFILVANFIGLFPYFYTITSQIMITFSLAMLVIFTVISYGFYKHGVGFLKLFVPSGVPVLILPLVTMIEVISFFSRPISLSLRLFANMLAGHITLKVFSGFIVSMIGIGIMGVGGSILPLIMTVAITALEFLVAFLQAYVFTVLTCMYLNDAVHPGH.

Helical transmembrane passes span F29 to I49, F87 to F107, I117 to Y137, L146 to I166, F196 to I216, and V219 to L239.

It belongs to the ATPase A chain family. As to quaternary structure, F-type ATPases have 2 components, CF(1) - the catalytic core - and CF(0) - the membrane proton channel. CF(1) has five subunits: alpha(3), beta(3), gamma(1), delta(1), epsilon(1). CF(0) has three main subunits: a(1), b(2) and c(9-12). The alpha and beta chains form an alternating ring which encloses part of the gamma chain. CF(1) is attached to CF(0) by a central stalk formed by the gamma and epsilon chains, while a peripheral stalk is formed by the delta and b chains.

Its subcellular location is the cell inner membrane. In terms of biological role, key component of the proton channel; it plays a direct role in the translocation of protons across the membrane. This is ATP synthase subunit a from Bartonella henselae (strain ATCC 49882 / DSM 28221 / CCUG 30454 / Houston 1) (Rochalimaea henselae).